Here is a 126-residue protein sequence, read N- to C-terminus: uncharacterized protein (126 aa).

Residues methionine 1–glutamate 101 are disordered. 2 stretches are compositionally biased toward polar residues: residues glycine 14–proline 27 and aspartate 86–alanine 99.

This is an uncharacterized protein from Schizosaccharomyces pombe (strain 972 / ATCC 24843) (Fission yeast).